The sequence spans 60 residues: Cytotoxin KJC3 (60 aa).

Disulfide bonds link Cys-3-Cys-21, Cys-14-Cys-38, Cys-42-Cys-53, and Cys-54-Cys-59.

It belongs to the three-finger toxin family. Short-chain subfamily. Type IA cytotoxin sub-subfamily. As to quaternary structure, monomer in solution; Homodimer and oligomer in the presence of negatively charged lipids forming a pore with a size ranging between 20 and 30 Angstroms. In terms of tissue distribution, expressed by the venom gland.

The protein resides in the secreted. Its subcellular location is the target cell membrane. Functionally, shows cytolytic activity on many different cells by forming pore in lipid membranes. In vivo, increases heart rate or kills the animal by cardiac arrest. In addition, it binds to heparin with high affinity, interacts with Kv channel-interacting protein 1 (KCNIP1) in a calcium-independent manner, and binds to integrin alpha-V/beta-3 (ITGAV/ITGB3) with moderate affinity. This chain is Cytotoxin KJC3, found in Naja sputatrix (Malayan spitting cobra).